Consider the following 229-residue polypeptide: MASPSDASRRRQATVKAKVVLLGEGAVGKTSLVLRYSENKFNDKHEQTLQASFVEKRLNIGGKRIQLAIWDTAGQERYHALGPIYYRDSQGAIIVYDITDEDSFHKARNWIKELKRMLGDKVTLCIVGNKIDLDRQRTVSEKDALEYAESVGAKHYYTSAKQSKGVAELFLDLAKRILEANPPSSSTPPESQRGAPSSHPPSQPRQRSTLIVTDDSEQPSPKQGGGCCS.

Gly23–Thr30 lines the GTP pocket. The Effector region signature appears at His45–Phe53. Residues Asp71–Gln75 and Asn129–Asp132 each bind GTP. The tract at residues Glu179–Ser229 is disordered. Residues Cys227 and Cys228 are each lipidated (S-geranylgeranyl cysteine).

Belongs to the small GTPase superfamily. Rab family.

The protein resides in the golgi apparatus membrane. The protein is Ras-related protein Rab-21 (RAB21) of Geodia cydonium (Sponge).